Reading from the N-terminus, the 595-residue chain is Inactive glycosyltransferase 25 family member 3 (595 aa).

The N-terminal stretch at 1–22 is a signal peptide; sequence MRAARAAPLLQLLLLLGPWLEA. Asn75, Asn153, Asn237, and Asn360 each carry an N-linked (GlcNAc...) asparagine glycan. The tract at residues 548-595 is disordered; sequence DTETSSPWDDDSGRLISWSGSQKTLRSPRLDLTGSSGHSLQPQPRDEL. A compositionally biased stretch (polar residues) spans 580 to 589; the sequence is TGSSGHSLQP. The short motif at 592–595 is the Prevents secretion from ER element; the sequence is RDEL.

It belongs to the glycosyltransferase 25 family. Ubiquitous. Highly expressed in secretory and nervous tissues.

The protein resides in the endoplasmic reticulum lumen. Probable cell adhesion protein involved in leukocyte transmigration across the blood-brain barrier. Does not express any beta-galactosyltransferase activity in vitro. This Homo sapiens (Human) protein is Inactive glycosyltransferase 25 family member 3 (CERCAM).